Reading from the N-terminus, the 266-residue chain is Undecaprenyl-diphosphatase (266 aa).

8 consecutive transmembrane segments (helical) span residues 1 to 21, 39 to 59, 87 to 107, 114 to 134, 149 to 169, 183 to 203, 218 to 238, and 246 to 266; these read MDTF…FLPI, QGLS…VIYF, WWII…KDFI, AEVI…ADKM, ALLI…RSGA, AAAR…AILV, ALIL…HYFL, and MTPF…FIFF.

Belongs to the UppP family.

Its subcellular location is the cell inner membrane. It catalyses the reaction di-trans,octa-cis-undecaprenyl diphosphate + H2O = di-trans,octa-cis-undecaprenyl phosphate + phosphate + H(+). Functionally, catalyzes the dephosphorylation of undecaprenyl diphosphate (UPP). Confers resistance to bacitracin. This Shewanella baltica (strain OS223) protein is Undecaprenyl-diphosphatase.